Consider the following 286-residue polypeptide: Puff II/9-1 protein (286 aa).

The N-terminal stretch at 1–19 (MKQFIVLTVVLLAIQELQG) is a signal peptide. Residues 61-235 (ITAIKKDNDF…ENALNTLRCE (175 aa)) form a helical region. Asn156 carries N-linked (GlcNAc...) asparagine glycosylation.

The chain is Puff II/9-1 protein (II/9-1) from Bradysia coprophila (Dark-winged fungus gnat).